The primary structure comprises 241 residues: Ubiquinone biosynthesis O-methyltransferase (241 aa).

S-adenosyl-L-methionine is bound by residues Arg-46, Gly-66, Asp-87, and Met-131.

It belongs to the methyltransferase superfamily. UbiG/COQ3 family.

The catalysed reaction is a 3-demethylubiquinol + S-adenosyl-L-methionine = a ubiquinol + S-adenosyl-L-homocysteine + H(+). It catalyses the reaction a 3-(all-trans-polyprenyl)benzene-1,2-diol + S-adenosyl-L-methionine = a 2-methoxy-6-(all-trans-polyprenyl)phenol + S-adenosyl-L-homocysteine + H(+). It participates in cofactor biosynthesis; ubiquinone biosynthesis. Functionally, O-methyltransferase that catalyzes the 2 O-methylation steps in the ubiquinone biosynthetic pathway. The protein is Ubiquinone biosynthesis O-methyltransferase of Bordetella pertussis (strain Tohama I / ATCC BAA-589 / NCTC 13251).